Consider the following 710-residue polypeptide: MLSFQYPDVYRDETSVQDYHGHKICDPYAWLEDPDSEQTKAFVEAQNKITVPFLEQCPIRGLYKERMTELYDYPKYSCHFKKGKRYFYFYNTGLQNQRVLYVQDSLEGEARVFLDPNTLSDDGTVALRGYAFSEDGEYFAYGLSASGSDWVTIKFMKVDGAKELPDVLERVKFTCMAWTHDGKGMFYNSYPQQDGKSDGTETSTNLHQKLCYHVLGTDQSEDVLCAEFPDEPKWMGGAELSDDGRYVLLSIWEGCDPVNRLWYCDLQQGSNGINGILKWVKLIDNFEGEYDYITNEGTVFTFKTNRNSPNYRLINIDFTDPDESKWKVLVPEHEKDVLEWVACVRSNFLVLCYLRNVKNILQLHDLTTGALLKTFPLDVGSVVGYSGRKKDSEIFYQFTSFLSPGVIYHCDLTREELEPRVFREVTVKGIDASDYQTIQVFYPSKDGTKIPMFIVHKKGIKLDGSHPAFLYGYGGFNISITPNYSVSRLIFVRHMGGVLAVANIRGGGEYGETWHKGGILANKQNCFDDFQCAAEYLIKEGYTTSKRLTINGGSNGGLLVAACANQRPDLFGCVIAQVGVMDMLKFHKFTIGHAWTTDYGCSDSKQHFEWLLKYSPLHNVKLPEADDIQYPSMLLLTADHDDRVVPLHSLKFIATLQYIVGRSRKQSNPLLIHVDTKAGHGPGKPTAKVIEEVSDMFAFIARCLNIEWIQ.

Position 1 is an N-acetylmethionine (M1). K157 carries the post-translational modification N6-acetyllysine. Residues S554, D641, and H680 each act as charge relay system in the active site.

Belongs to the peptidase S9A family. As to expression, expressed in all tissues tested: uterus, kidney, heart, lung, small intestine, smooth muscle, liver, spleen, thymus, adrenal, pituitary and whole brain.

Its subcellular location is the cytoplasm. The catalysed reaction is Hydrolysis of Pro-|-Xaa &gt;&gt; Ala-|-Xaa in oligopeptides.. Its activity is regulated as follows. Inhibited by DFP, Z-Pro-prolinal and poststatin, but not by PMSF, SBTI, EDTA, leupeptin, E-64 and pepstatin. Cleaves peptide bonds on the C-terminal side of prolyl residues within peptides that are up to approximately 30 amino acids long. Has high activity on the succinyl- (suc-) peptide-4-methylcoumaryl-7-amide (MCA) substrates suc-Gly-Pro-Leu-Gly-Pro-MCA, suc-Gly-Pro-MCA and suc-Ala-Ala-Ala-MCA. This is Prolyl endopeptidase from Rattus norvegicus (Rat).